The following is a 357-amino-acid chain: tRNA N6-adenosine threonylcarbamoyltransferase (357 aa).

2 residues coordinate Fe cation: histidine 116 and histidine 120. Substrate is bound by residues 139-143 (LVSGG), aspartate 172, glycine 185, and asparagine 284. Fe cation is bound at residue aspartate 312.

This sequence belongs to the KAE1 / TsaD family. Fe(2+) serves as cofactor.

It localises to the cytoplasm. The catalysed reaction is L-threonylcarbamoyladenylate + adenosine(37) in tRNA = N(6)-L-threonylcarbamoyladenosine(37) in tRNA + AMP + H(+). Its function is as follows. Required for the formation of a threonylcarbamoyl group on adenosine at position 37 (t(6)A37) in tRNAs that read codons beginning with adenine. Is involved in the transfer of the threonylcarbamoyl moiety of threonylcarbamoyl-AMP (TC-AMP) to the N6 group of A37, together with TsaE and TsaB. TsaD likely plays a direct catalytic role in this reaction. In Synechococcus sp. (strain CC9902), this protein is tRNA N6-adenosine threonylcarbamoyltransferase.